A 681-amino-acid chain; its full sequence is Methionine--tRNA ligase (681 aa).

The short motif at 14–24 (PYANGSIHLGH) is the 'HIGH' region element. Cys145, Cys148, Cys158, and Cys161 together coordinate Zn(2+). The 'KMSKS' region signature appears at 331–335 (KMSKS). Lys334 is a binding site for ATP. The tRNA-binding domain maps to 579 to 681 (TFAAVDLRVA…SGAKPGQRIK (103 aa)).

This sequence belongs to the class-I aminoacyl-tRNA synthetase family. MetG type 1 subfamily. Homodimer. Requires Zn(2+) as cofactor.

Its subcellular location is the cytoplasm. It carries out the reaction tRNA(Met) + L-methionine + ATP = L-methionyl-tRNA(Met) + AMP + diphosphate. Is required not only for elongation of protein synthesis but also for the initiation of all mRNA translation through initiator tRNA(fMet) aminoacylation. This chain is Methionine--tRNA ligase, found in Pseudomonas putida (strain W619).